The primary structure comprises 509 residues: Aromatase (509 aa).

C437 is a binding site for heme.

This sequence belongs to the cytochrome P450 family. Heme is required as a cofactor.

Its subcellular location is the membrane. It catalyses the reaction testosterone + 3 reduced [NADPH--hemoprotein reductase] + 3 O2 = 17beta-estradiol + formate + 3 oxidized [NADPH--hemoprotein reductase] + 4 H2O + 4 H(+). The catalysed reaction is androst-4-ene-3,17-dione + 3 reduced [NADPH--hemoprotein reductase] + 3 O2 = estrone + formate + 3 oxidized [NADPH--hemoprotein reductase] + 4 H2O + 4 H(+). Its function is as follows. Catalyzes the formation of aromatic C18 estrogens from C19 androgens. The polypeptide is Aromatase (CYP19A1) (Taeniopygia guttata (Zebra finch)).